The primary structure comprises 109 residues: Protein GOLVEN 5 (109 aa).

An N-terminal signal peptide occupies residues 1-24; it reads MTNITSSFLCLLILLLFCLSFGYS. A propeptide spanning residues 25-96 is cleaved from the precursor; sequence LHGDKDEVLS…EEDDLVAYTA (72 aa). Residues 54 to 88 are disordered; sequence KKAQVRGRSGQEFSKETTKMMMKKTTKKETNVEEE. Tyrosine 98 is modified (sulfotyrosine). Position 106 is a hydroxyproline (proline 106).

This sequence belongs to the RGF family. As to quaternary structure, binds to LRR receptor-like serine/threonine-protein kinases RGI1, RGI2 and RGI3 to trigger their dimerization with SERK proteins and subsequent signaling. Expressed in root tips.

It localises to the secreted. Functionally, signaling peptide (root growth factor) that maintains the postembryonic root stem cell niche in a PIN2-traffic dependent manner. Root growth factor that regulates the pattern of root growth and lateral root development by modulating the length and the number of cortical cells in the root apical meristem (RAM), and the anticlinal asymmetric cell divisions in lateral root initiation cells. Influences the longitudinal growth rate in the primary root in response to phosphate ion (Pi)-deprivation. This is Protein GOLVEN 5 from Arabidopsis thaliana (Mouse-ear cress).